The sequence spans 528 residues: Low affinity inorganic phosphate transporter 4 (528 aa).

Residues 1-18 (MALEVLEALDSARTQWYH) lie on the Cytoplasmic side of the membrane. Residues 19–39 (VTAIVIAGMGFFTDAYDLFCI) traverse the membrane as a helical segment. Residues 40–68 (TTVSKLLGRLYYFDPSTGKPGKLPNNVNN) lie on the Extracellular side of the membrane. The helical transmembrane segment at 69–89 (LVTGVALVGTLSGQLFFGYLG) threads the bilayer. Residues 90 to 96 (DKLGRKK) are Cytoplasmic-facing. The chain crosses the membrane as a helical span at residues 97 to 117 (VYGVTLILMVACAICSGLSFG). Residues 118-122 (ASAKS) lie on the Extracellular side of the membrane. A helical membrane pass occupies residues 123–143 (VMGTLCFFRFWLGFGIGGDYP). Residues 144-158 (LSATIMSEYANKRTR) are Cytoplasmic-facing. Residues 159 to 179 (GAFIAAVFAMQGVGIIFAGLV) form a helical membrane-spanning segment. The Extracellular segment spans residues 180–208 (SMCLSAGFKASYHAPSFHDDPIMSTQPQG). A helical transmembrane segment spans residues 209–229 (DLMWRLVLMIGAVPAAMTYYW). Residues 230–292 (RMKMPETGRY…NEFFTRHGRH (63 aa)) lie on the Cytoplasmic side of the membrane. A helical membrane pass occupies residues 293 to 313 (LIGTMTSWFLLDIAFYSQNLT). Topologically, residues 314–341 (QKDIFPAMGLIDKDFEMNAIQEVFETSR) are extracellular. The chain crosses the membrane as a helical span at residues 342–362 (AMFVIALFGTFPGYWFTVFFI). Residues 363 to 371 (EKLGRYKIQ) lie on the Cytoplasmic side of the membrane. The helical transmembrane segment at 372 to 392 (LIGFFMMSVFMFIIGVKYDYL) threads the bilayer. The Extracellular segment spans residues 393–401 (RNENSHMFA). Residues 402–422 (LLYGLTFFFANFGPNSTTFVL) traverse the membrane as a helical segment. Residues 423–433 (PAELFPTRVRS) are Cytoplasmic-facing. The helical transmembrane segment at 434 to 454 (TCHALSAAAGKAGAMVGAFGI) threads the bilayer. Residues 455–467 (QNYTQKGEQKQIK) are Extracellular-facing. An N-linked (GlcNAc...) asparagine glycan is attached at N456. The chain crosses the membrane as a helical span at residues 468–488 (HAMMILAVTNLIGFFCSFLVT). Topologically, residues 489-528 (ETKGRSLEEISGEDGRESELTPTPPNNRVPTRQEPRSETM) are cytoplasmic. 2 stretches are compositionally biased toward basic and acidic residues: residues 496-507 (EEISGEDGRESE) and 519-528 (TRQEPRSETM). Residues 496 to 528 (EEISGEDGRESELTPTPPNNRVPTRQEPRSETM) are disordered.

It belongs to the major facilitator superfamily. Phosphate:H(+) symporter (TC 2.A.1.9) family. Expressed only in mycorrhizal roots, exclusively in cortical cells containing arbuscules, upon arbuscular mycorrhizal (AM) symbiosis with AM fungi (e.g. Gigaspora margarita and Funnelliformis mosseae). Also observed in root tips of non-mycorrhizal roots, in a phosphate (Pi) depended-manner, highest expression levels being observed in low Pi conditions.

The protein resides in the cell membrane. The enzyme catalyses phosphate(in) + H(+)(in) = phosphate(out) + H(+)(out). Low-affinity transporter for external inorganic phosphate (Pi) probably involved in the acquisition of phosphate released by arbuscular mycorrhizal (AM) fungi (e.g. Gigaspora margarita and Funnelliformis mosseae) during AM symbiosis; required for propper mycorrhizal arbuscule morphology. Acts as a Pi-sensing machinery at the root tip level, independently of AM fungi, involved in the regulation of early root branching and lateral roots formation. In Lotus japonicus (Lotus corniculatus var. japonicus), this protein is Low affinity inorganic phosphate transporter 4.